A 536-amino-acid polypeptide reads, in one-letter code: L-aspartate oxidase 2 (536 aa).

Residues Glu-22–Ala-25 and Ser-51–Gly-58 contribute to the FAD site. Residue Arg-284 is the Proton donor/acceptor of the active site. FAD is bound by residues Glu-369 and Ser-385–Leu-386.

Belongs to the FAD-dependent oxidoreductase 2 family. NadB subfamily. FAD serves as cofactor.

The protein resides in the cytoplasm. It carries out the reaction L-aspartate + O2 = iminosuccinate + H2O2. The protein operates within cofactor biosynthesis; NAD(+) biosynthesis; iminoaspartate from L-aspartate (oxidase route): step 1/1. Functionally, catalyzes the oxidation of L-aspartate to iminoaspartate, the first step in the de novo biosynthesis of NAD(+). The chain is L-aspartate oxidase 2 (nadB2) from Ralstonia nicotianae (strain ATCC BAA-1114 / GMI1000) (Ralstonia solanacearum).